Consider the following 1346-residue polypeptide: Cytokinesis protein sepH (1346 aa).

The disordered stretch occupies residues 1-50; it reads MVSRSNEGPEAPHPASRTPGAPAKGRLTRLGSSPSKRDDKAKDDRMGKTS. Residues 35–50 are compositionally biased toward basic and acidic residues; sequence SKRDDKAKDDRMGKTS. The region spanning 60–310 is the Protein kinase domain; sequence YQLGDCLGRG…ARKLLKHPWI (251 aa). Residues 66–74 and lysine 89 contribute to the ATP site; that span reads LGRGAFGSV. The Proton acceptor role is filled by aspartate 182. 3 disordered regions span residues 342 to 380, 446 to 497, and 1211 to 1295; these read RSPE…PSPV, DESF…HMRR, and LCKL…AGAS. 2 stretches are compositionally biased toward polar residues: residues 477-489 and 1220-1249; these read QQAN…SQNG and RGST…NQSK.

It belongs to the protein kinase superfamily. Ser/Thr protein kinase family. CDC7 subfamily. Mg(2+) is required as a cofactor.

It carries out the reaction L-seryl-[protein] + ATP = O-phospho-L-seryl-[protein] + ADP + H(+). It catalyses the reaction L-threonyl-[protein] + ATP = O-phospho-L-threonyl-[protein] + ADP + H(+). Required for early events during cytokinesis including localization of cytoskeletal components to the cytokinetic ring. This is Cytokinesis protein sepH from Emericella nidulans (strain FGSC A4 / ATCC 38163 / CBS 112.46 / NRRL 194 / M139) (Aspergillus nidulans).